Here is a 279-residue protein sequence, read N- to C-terminus: Vomeronasal type-1 receptor A8 (279 aa).

Residues 1–19 (MNKDHTLYCSVYIRNAFFS) lie on the Extracellular side of the membrane. Residues 20–40 (EIGIGISANSCLLLFHTFMFI) form a helical membrane-spanning segment. Over 41 to 49 (RGHRPRLTD) the chain is Cytoplasmic. A helical transmembrane segment spans residues 50-70 (LPIGFVALIHLVMLLLAAYIT). Topologically, residues 71–93 (EDFFMSSGGWDDITCKLVIFLHR) are extracellular. A disulfide bond links Cys-85 and Cys-172. Residues 94–114 (FFRSLSVCATCLLSVFQAIIL) traverse the membrane as a helical segment. Over 115–134 (CPQSSHLAKLKQNSPHQLSY) the chain is Cytoplasmic. Residues 135-155 (FFIFLSIFYTSISSQILIAAI) form a helical membrane-spanning segment. The Extracellular segment spans residues 156–159 (PTQN). N-linked (GlcNAc...) asparagine glycosylation is present at Asn-159. Residues 160-180 (ITFVNLIYITNSCSFLPLSSS) form a helical membrane-spanning segment. Residues 181–187 (MQHTFST) are Cytoplasmic-facing. Residues 188-208 (LLTFRNVFVIGLMGLSTCYMA) traverse the membrane as a helical segment. The Extracellular portion of the chain corresponds to 209-238 (TLLCRHKTRSQRLQNSKLSPKATPEQRALR). A helical membrane pass occupies residues 239-259 (TILMLMSFFLLMSTFDSIISY). The Cytoplasmic segment spans residues 260–279 (SRTIITGKSTALLCPDSCRS).

Belongs to the G-protein coupled receptor 1 family. In terms of tissue distribution, expressed in a subset of sensory neurons located in the apical layer of the vomeronasal organ.

Its subcellular location is the cell membrane. Functionally, putative pheromone receptor implicated in the regulation of social and reproductive behavior. This chain is Vomeronasal type-1 receptor A8, found in Mus musculus (Mouse).